Reading from the N-terminus, the 337-residue chain is D-alanine--D-alanine ligase (337 aa).

Residues 124–330 (KMWFSALGIP…FTEYLSLVIN (207 aa)) form the ATP-grasp domain. Residue 154–209 (ALAQWGSIFVKAASQGSSVGCYKVDDSAKVAGVLKDAFGYAPYVIVEKTIKARELE) participates in ATP binding. Mg(2+) contacts are provided by D284, E297, and N299.

The protein belongs to the D-alanine--D-alanine ligase family. Requires Mg(2+) as cofactor. Mn(2+) is required as a cofactor.

It is found in the cytoplasm. The enzyme catalyses 2 D-alanine + ATP = D-alanyl-D-alanine + ADP + phosphate + H(+). It functions in the pathway cell wall biogenesis; peptidoglycan biosynthesis. Functionally, cell wall formation. The polypeptide is D-alanine--D-alanine ligase (Shewanella baltica (strain OS223)).